The following is a 684-amino-acid chain: Protein EXECUTER 1, chloroplastic (684 aa).

Residues 1–31 show a composition bias toward polar residues; the sequence is MPSLSTPPSQNLAFSPAASATSSRLTPSSKR. The N-terminal 46 residues, 1–46, are a transit peptide targeting the chloroplast; the sequence is MPSLSTPPSQNLAFSPAASATSSRLTPSSKRSFYPHRLPDPTALCR. The disordered stretch occupies residues 1–66; that stretch reads MPSLSTPPSQ…SSSSSDDNPR (66 aa). The span at 48 to 61 shows a compositional bias: low complexity; sequence SSSSGSNSSSSSSS. Residues 127 to 162 form the UVR domain; sequence DRLLSVLKSQLNRAIKREDYEDAARLKVAIAATATN. Positions 278–318 are disordered; that stretch reads TLTPGRFLTSPGRKEDTGNLAVESSEDEESDNSDDDSDLLE. Residues 301–318 show a composition bias toward acidic residues; that stretch reads SSEDEESDNSDDDSDLLE.

It localises to the plastid. The protein resides in the chloroplast. Its function is as follows. Together with EX2, enables higher plants to perceive singlet oxygen as a stress signal in plastid that activates a genetically determined nuclear stress response program which triggers a programmed cell death (PCD). This transfer of singlet oxygen-induced stress-related signals from the plastid to the nucleus that triggers genetically controlled PCD pathway is unique to photosynthetic eukaryotes and operates under mild stress conditions, impeding photosystem II (PSII) without causing photooxidative damage of the plant. This chain is Protein EXECUTER 1, chloroplastic, found in Arabidopsis thaliana (Mouse-ear cress).